A 453-amino-acid polypeptide reads, in one-letter code: MNLFLAGLDHTTAPVEIREQLAFSQTDLPSALLQLTQADNGSPPLFTEAVILSTCNRVEIYGVANPGTTAQHVVDFLANFHRRPAGSFVHTLYFYQGEAVARHLCATAAGLRSLVLGEAQIQGQVRSAYEAAQRIGSVGSVLHRLFQIALVAGKRVRHETTIGKGAASVSQAGVELARRRLGDLRGREVLLIGGGEVSELAAQNLIANGADRLTIVNRTSSRAAALAERYGAEMLDFGALPEALARADIVISSTAAPVPIIYRHHIAEALSHKQRMRACGDCDPPAMLLIDLAVPRDIAADVAELPGVYLFTVDDLREVVSHTIELRSAVIDIANQIVEEQVREFSDWLRTQEALPVLTMLRQRAEEVRNEELTRALRRLHDLSPEQRAVIEGLSRSIVNKLLHPPTRCLREAAAHGQGKRYATMLAELFNLEHALEHKAGAMGNTELTDRMR.

Residues 54-57 (TCNR), Ser113, 118-120 (EAQ), and Gln124 each bind substrate. Cys55 functions as the Nucleophile in the catalytic mechanism. 193–198 (GGGEVS) provides a ligand contact to NADP(+).

This sequence belongs to the glutamyl-tRNA reductase family. As to quaternary structure, homodimer.

It catalyses the reaction (S)-4-amino-5-oxopentanoate + tRNA(Glu) + NADP(+) = L-glutamyl-tRNA(Glu) + NADPH + H(+). Its pathway is porphyrin-containing compound metabolism; protoporphyrin-IX biosynthesis; 5-aminolevulinate from L-glutamyl-tRNA(Glu): step 1/2. It functions in the pathway porphyrin-containing compound metabolism; chlorophyll biosynthesis. In terms of biological role, catalyzes the NADPH-dependent reduction of glutamyl-tRNA(Glu) to glutamate 1-semialdehyde (GSA). The chain is Glutamyl-tRNA reductase from Chloroflexus aggregans (strain MD-66 / DSM 9485).